The sequence spans 370 residues: MICPHQGTCGGCALALPYEEQWKLKESEFRELLPLSKDTPTDLYPSAPHSFRARAEFRLYRNESGRLSYAMSQKGSKQPLPIQSCPILLPSIQALMPSLLEALESDEILTQKLFGVEFLSGLSQEVLVSLLYHKRLDHAWEERALGLLSSLPTLSSLIGRSKGQKIVLGESFITETLTIDSKPWRFLHYEGSFTQPNPKVNEKMIEWIISAPPQGDLLELYCGAGNFTLPLSSRYAKILATEVSKTSIHAAKQNCELNSVRHISFVRLNAQETQSALEGEREFYRLRELDLPSYDFQAVFVDPPRAGLGAEVASFLRRFDQILYISCNPKTLQSDLEVLQLSHDVERFALFDQFPYTPHLESGVILRQRR.

Positions 195, 221, 226, 242, and 302 each coordinate S-adenosyl-L-methionine. Cys-327 functions as the Nucleophile in the catalytic mechanism. The Proton acceptor role is filled by Glu-361.

It belongs to the class I-like SAM-binding methyltransferase superfamily. RNA M5U methyltransferase family. TrmA subfamily.

It carries out the reaction uridine(54) in tRNA + S-adenosyl-L-methionine = 5-methyluridine(54) in tRNA + S-adenosyl-L-homocysteine + H(+). The enzyme catalyses uridine(341) in tmRNA + S-adenosyl-L-methionine = 5-methyluridine(341) in tmRNA + S-adenosyl-L-homocysteine + H(+). Functionally, dual-specificity methyltransferase that catalyzes the formation of 5-methyluridine at position 54 (m5U54) in all tRNAs, and that of position 341 (m5U341) in tmRNA (transfer-mRNA). This Wolinella succinogenes (strain ATCC 29543 / DSM 1740 / CCUG 13145 / JCM 31913 / LMG 7466 / NCTC 11488 / FDC 602W) (Vibrio succinogenes) protein is tRNA/tmRNA (uracil-C(5))-methyltransferase.